A 459-amino-acid polypeptide reads, in one-letter code: MKISVRNLEPTKVKLTVTVEPEELNPYLDAARKEIAKQVNVPGFRKGHVPGKIIDQRIGFAAVAGEAVNDAVPELYSKALEEKKIRPMAQPEFDVQDVPQSANDETKLKFTATVERRPDIELPEIDGLEIAISKPEVKDEDVDKRLEALRQRFGTLVGVDRPAAKGDFANIDLTAEIDGETVDSQEGVSYELGSNTMLDGLDEALDGLSAGEETTFEGTLEAGEHEGQKATVKVKVNSVKAEELPELNDEFASEASEFDTLDELKADIRKAAAQDAEGRQATEARDAFIAKLQEGLEIPVPKGVKANMVEEQLKGMTPDPEKATKEQKAQAEETVEKDLRDQMVLDALAEKLDVQVSQSDVFNFLASIAQQYGMDPNNFIQAIIKNGQLGSAVQEVGRSKGLLAGMRAVKFTADGEVVDLSAFLGEAAEDEESESVEAASAAAAVADELSAKDDAKDAE.

Positions 166 to 245 constitute a PPIase FKBP-type domain; sequence GDFANIDLTA…VNSVKAEELP (80 aa).

Belongs to the FKBP-type PPIase family. Tig subfamily.

It localises to the cytoplasm. The catalysed reaction is [protein]-peptidylproline (omega=180) = [protein]-peptidylproline (omega=0). Its function is as follows. Involved in protein export. Acts as a chaperone by maintaining the newly synthesized protein in an open conformation. Functions as a peptidyl-prolyl cis-trans isomerase. This Bifidobacterium longum (strain NCC 2705) protein is Trigger factor.